The chain runs to 166 residues: Large ribosomal subunit protein mL41 (166 aa).

The N-terminal 26 residues, 1 to 26 (MNNCIKVVPIALRCQQRTISTSSVLE), are a transit peptide targeting the mitochondrion. A disordered region spans residues 136-166 (KDGSAKEPSVNEQLTPEEALQRARKTGSDIF).

Belongs to the mitochondrion-specific ribosomal protein mL41 family. Component of the mitochondrial ribosome large subunit (39S) which comprises a 16S rRNA and about 50 distinct proteins.

Its subcellular location is the mitochondrion. The chain is Large ribosomal subunit protein mL41 (mRpL41) from Drosophila melanogaster (Fruit fly).